A 180-amino-acid polypeptide reads, in one-letter code: Probable chorismate pyruvate-lyase (180 aa).

Residues arginine 73, leucine 111, and glutamate 170 each contribute to the substrate site.

Belongs to the UbiC family.

It is found in the cytoplasm. It catalyses the reaction chorismate = 4-hydroxybenzoate + pyruvate. It functions in the pathway cofactor biosynthesis; ubiquinone biosynthesis. In terms of biological role, removes the pyruvyl group from chorismate, with concomitant aromatization of the ring, to provide 4-hydroxybenzoate (4HB) for the ubiquinone pathway. The chain is Probable chorismate pyruvate-lyase from Nitrosospira multiformis (strain ATCC 25196 / NCIMB 11849 / C 71).